A 216-amino-acid polypeptide reads, in one-letter code: MTVQLRVYVPPHPLIKHWLAVARDAATPSVLFRSAITELGRWLTYEAAREWLPTEETTVQTPLEICPATVINPQVPVAVVPILRAGLGLLEGAQTVLPLASIYHLGLVRNEETLEASCYLNKLPEKFDPQTRVLITDPMLATGGSIMKAMSELTERGVDPSLVRIVSVVAAPPALQKLNAAYSGLIVYTATIDETVNDQGFIVPGLGDAGDRIFGT.

Residues Arg-84, Arg-109, and 137 to 145 (DPMLATGGS) contribute to the 5-phospho-alpha-D-ribose 1-diphosphate site. Uracil is bound by residues Ile-202 and 207 to 209 (GDA). 5-phospho-alpha-D-ribose 1-diphosphate is bound at residue Asp-208.

This sequence belongs to the UPRTase family. The cofactor is Mg(2+).

It carries out the reaction UMP + diphosphate = 5-phospho-alpha-D-ribose 1-diphosphate + uracil. The protein operates within pyrimidine metabolism; UMP biosynthesis via salvage pathway; UMP from uracil: step 1/1. With respect to regulation, allosterically activated by GTP. Its function is as follows. Catalyzes the conversion of uracil and 5-phospho-alpha-D-ribose 1-diphosphate (PRPP) to UMP and diphosphate. The sequence is that of Uracil phosphoribosyltransferase from Nostoc sp. (strain PCC 7120 / SAG 25.82 / UTEX 2576).